A 360-amino-acid polypeptide reads, in one-letter code: UDP-D-xylose:L-fucose alpha-1,3-D-xylosyltransferase MGP4 (360 aa).

Residues 1–25 are disordered; it reads MAQQKFLHQRPIQNPFTNPFSSSPL. Residues 1-41 are Cytoplasmic-facing; the sequence is MAQQKFLHQRPIQNPFTNPFSSSPLSTSSISNRPISLLSRN. The segment covering 14–25 has biased composition (low complexity); sequence NPFTNPFSSSPL. The chain crosses the membrane as a helical; Signal-anchor for type II membrane protein span at residues 42-62; it reads GLLLLLALLVILGVFLPWAGS. At 63-360 the chain is on the lumenal side; it reads PLFPSPNKLS…ASESPLGKLE (298 aa). N-linked (GlcNAc...) asparagine glycosylation is found at Asn-93 and Asn-168. The DXD motif signature appears at 191-193; the sequence is DVD. N-linked (GlcNAc...) asparagine glycosylation is found at Asn-285 and Asn-310.

It belongs to the glycosyltransferase 77 family. It depends on Mn(2+) as a cofactor. The cofactor is Mg(2+). In terms of tissue distribution, widely expressed.

The protein localises to the golgi apparatus membrane. In terms of biological role, catalyzes the transfer of D-xylose from UDP-alpha-D-xylose onto L-fucose. Probably involved in the biosynthesis of rhamnogalacturonan II (RG-II) through xylosylation of the internal fucose moiety of the A-chain of RG-II, a structurally complex pectic polysaccharide of the primary cell wall. RG-II is essential for the cell wall integrity of rapidly growing tissues such as roots and pollen tube growth and elongation. The protein is UDP-D-xylose:L-fucose alpha-1,3-D-xylosyltransferase MGP4 of Arabidopsis thaliana (Mouse-ear cress).